The following is a 389-amino-acid chain: UDP-GlcNAc:betaGal beta-1,3-N-acetylglucosaminyltransferase 8 (389 aa).

The Cytoplasmic portion of the chain corresponds to 1–7; the sequence is MRCRKCQ. Residues 8 to 24 form a helical; Signal-anchor for type II membrane protein membrane-spanning segment; it reads LCLSALLTLLGLKVYIE. The Lumenal segment spans residues 25 to 389; the sequence is WTSESWLKKA…RHLWVPELQC (365 aa). The disordered stretch occupies residues 36–57; sequence PRGALPSPTPPNAEPTLPTNLS. N-linked (GlcNAc...) asparagine glycans are attached at residues N55 and N212.

The protein belongs to the glycosyltransferase 31 family. Interacts with B3GNT2; this interaction greatly increases B3GNT2 catalytic activity, independently of B3GNT8 enzymatic activity.

It localises to the golgi apparatus membrane. Its pathway is protein modification; protein glycosylation. Its function is as follows. Beta-1,3-N-acetylglucosaminyltransferase that plays a role in the elongation of specific branch structures of multiantennary N-glycans. Has strong activity towards tetraantennary N-glycans and 2,6 triantennary glycans. The chain is UDP-GlcNAc:betaGal beta-1,3-N-acetylglucosaminyltransferase 8 from Mus musculus (Mouse).